The chain runs to 341 residues: Farnesyl pyrophosphate synthase (341 aa).

Isopentenyl diphosphate-binding residues include Lys48, Arg51, and Gln86. Mg(2+)-binding residues include Asp93 and Asp97. Position 102 (Arg102) interacts with dimethylallyl diphosphate. Position 103 (Arg103) interacts with isopentenyl diphosphate. Positions 190, 191, 229, and 246 each coordinate dimethylallyl diphosphate.

The protein belongs to the FPP/GGPP synthase family. Requires Mg(2+) as cofactor.

It localises to the cytoplasm. The catalysed reaction is isopentenyl diphosphate + dimethylallyl diphosphate = (2E)-geranyl diphosphate + diphosphate. It catalyses the reaction isopentenyl diphosphate + (2E)-geranyl diphosphate = (2E,6E)-farnesyl diphosphate + diphosphate. The protein operates within isoprenoid biosynthesis; farnesyl diphosphate biosynthesis; farnesyl diphosphate from geranyl diphosphate and isopentenyl diphosphate: step 1/1. Its pathway is isoprenoid biosynthesis; geranyl diphosphate biosynthesis; geranyl diphosphate from dimethylallyl diphosphate and isopentenyl diphosphate: step 1/1. In terms of biological role, catalyzes the sequential condensation of isopentenyl pyrophosphate with the allylic pyrophosphates, dimethylallyl pyrophosphate, and then with the resultant geranylpyrophosphate to the ultimate product farnesyl pyrophosphate. The protein is Farnesyl pyrophosphate synthase (FPS1) of Helianthus annuus (Common sunflower).